The following is a 578-amino-acid chain: A-type ATP synthase subunit A (578 aa).

Position 228-235 (228-235 (GPFGSGKT)) interacts with ATP.

This sequence belongs to the ATPase alpha/beta chains family. As to quaternary structure, has multiple subunits with at least A(3), B(3), C, D, E, F, H, I and proteolipid K(x).

It localises to the cell membrane. The catalysed reaction is ATP + H2O + 4 H(+)(in) = ADP + phosphate + 5 H(+)(out). In terms of biological role, component of the A-type ATP synthase that produces ATP from ADP in the presence of a proton gradient across the membrane. The A chain is the catalytic subunit. The chain is A-type ATP synthase subunit A from Methanosarcina barkeri (strain Fusaro / DSM 804).